The primary structure comprises 358 residues: Protein Wnt-8b (358 aa).

A signal peptide spans 1–23 (MFMHLEVYYYAFILMAHMKTCCG). The cysteines at positions 55 and 66 are disulfide-linked. N-linked (GlcNAc...) asparagine glycosylation is present at N104. 10 disulfide bridges follow: C105-C113, C115-C133, C181-C195, C183-C190, C257-C295, C273-C288, C292-C334, C310-C325, C312-C322, and C317-C318. A lipid anchor (O-palmitoleoyl serine) is attached at S187. N-linked (GlcNAc...) asparagine glycans are attached at residues N260 and N279. N-linked (GlcNAc...) asparagine glycosylation is present at N345.

The protein belongs to the Wnt family. In terms of processing, palmitoleoylation is required for efficient binding to frizzled receptors. Depalmitoleoylation leads to Wnt signaling pathway inhibition. Post-translationally, proteolytic processing by tiki1 and tiki2 promotes oxidation and formation of large disulfide-bond oligomers, leading to inactivation of wnt8b. In terms of tissue distribution, hindbrain r1, 2 and 5.

It is found in the secreted. Its subcellular location is the extracellular space. The protein resides in the extracellular matrix. Ligand for fzd8a, a member of the G-protein coupled frizzled receptor family. May play a role in the establishment of polarity in the nervous system. Involved in canonical Wnt signaling pathway. During embryonic development, required for the acquisition of caudal diencephalic fate. Antagonizes eye specification. The chain is Protein Wnt-8b (wnt8b) from Danio rerio (Zebrafish).